Consider the following 488-residue polypeptide: MSSRKVHFVSLGCPKNRVDSEVMLGVARAAGFAHVDDAAEAEVIVVNTCGFIGEAKKESIDAIFEMAQHKEHGSCKRLVVAGCLSQRHPEELAREMPEVDHFLGSSDMLKLGRVLAGDAERMLVGNPAEWLIQAGDPRTLSTPGGSAYVKIAEGCNRTCSFCVIPDLRGAQRSRPIPDVVREVEQLAAAGVREINLISQDTIAYGRDAAGRSEGGARATLAQLVERVADVPGVRWVRLFYLYPETMTDDLVELLAGHPRVVPYVDMPLQHAADAMLRRMRRGHGGDRLRRVVSTLRERVPDLTFRTAFIVGHPGETDAEFEELCDFVRWAEFERVGVFRYSDEEASRSYELEGKVPARTAASRYRRLMTLQRRISHKKSAAMIGRELEVLVEGTSDEHEYVLMGRHAGQAPEIDGQVYLSGGEVRPGEMCRVRITQASDYDLVGELLDDEESGRGAGLPPAADLGAVTAKRRVALRVLQTDGRERQQN.

An MTTase N-terminal domain is found at 4–120 (RKVHFVSLGC…LGRVLAGDAE (117 aa)). The [4Fe-4S] cluster site is built by Cys-13, Cys-49, Cys-83, Cys-155, Cys-159, and Cys-162. One can recognise a Radical SAM core domain in the interval 141 to 377 (STPGGSAYVK…MTLQRRISHK (237 aa)). The TRAM domain maps to 380 to 448 (AAMIGRELEV…DYDLVGELLD (69 aa)).

Belongs to the methylthiotransferase family. RimO subfamily. [4Fe-4S] cluster serves as cofactor.

The protein resides in the cytoplasm. The catalysed reaction is L-aspartate(89)-[ribosomal protein uS12]-hydrogen + (sulfur carrier)-SH + AH2 + 2 S-adenosyl-L-methionine = 3-methylsulfanyl-L-aspartate(89)-[ribosomal protein uS12]-hydrogen + (sulfur carrier)-H + 5'-deoxyadenosine + L-methionine + A + S-adenosyl-L-homocysteine + 2 H(+). Functionally, catalyzes the methylthiolation of an aspartic acid residue of ribosomal protein uS12. The protein is Ribosomal protein uS12 methylthiotransferase RimO of Sorangium cellulosum (strain So ce56) (Polyangium cellulosum (strain So ce56)).